The primary structure comprises 152 residues: Deoxyuridine 5'-triphosphate nucleotidohydrolase (152 aa).

Substrate is bound by residues Arg-71–Gly-73, Asn-84, Leu-88–Asp-90, and Met-98.

The protein belongs to the dUTPase family. In terms of assembly, homotrimer. The cofactor is Mg(2+).

It catalyses the reaction dUTP + H2O = dUMP + diphosphate + H(+). It participates in pyrimidine metabolism; dUMP biosynthesis; dUMP from dCTP (dUTP route): step 2/2. Functionally, this enzyme is involved in nucleotide metabolism: it produces dUMP, the immediate precursor of thymidine nucleotides and it decreases the intracellular concentration of dUTP so that uracil cannot be incorporated into DNA. In Escherichia coli O157:H7, this protein is Deoxyuridine 5'-triphosphate nucleotidohydrolase.